The primary structure comprises 479 residues: Type I inositol polyphosphate 5-phosphatase 8 (479 aa).

Catalytic stretches follow at residues 300-315 (DKVI…LRAS) and 379-394 (KRRT…WKGD).

The protein belongs to the inositol polyphosphate 5-phosphatase family.

The chain is Type I inositol polyphosphate 5-phosphatase 8 from Arabidopsis thaliana (Mouse-ear cress).